The primary structure comprises 371 residues: Queuine tRNA-ribosyltransferase (371 aa).

Catalysis depends on Asp-90, which acts as the Proton acceptor. Residues 90–94 (DSGGF), Asp-144, Gln-189, and Gly-215 each bind substrate. Positions 246–252 (GVGTPEN) are RNA binding. Residue Asp-265 is the Nucleophile of the active site. The segment at 270-274 (TRNAR) is RNA binding; important for wobble base 34 recognition. Residues Cys-303, Cys-305, Cys-308, and His-334 each coordinate Zn(2+).

It belongs to the queuine tRNA-ribosyltransferase family. Homodimer. Within each dimer, one monomer is responsible for RNA recognition and catalysis, while the other monomer binds to the replacement base PreQ1. Requires Zn(2+) as cofactor.

It catalyses the reaction 7-aminomethyl-7-carbaguanine + guanosine(34) in tRNA = 7-aminomethyl-7-carbaguanosine(34) in tRNA + guanine. It participates in tRNA modification; tRNA-queuosine biosynthesis. Its function is as follows. Catalyzes the base-exchange of a guanine (G) residue with the queuine precursor 7-aminomethyl-7-deazaguanine (PreQ1) at position 34 (anticodon wobble position) in tRNAs with GU(N) anticodons (tRNA-Asp, -Asn, -His and -Tyr). Catalysis occurs through a double-displacement mechanism. The nucleophile active site attacks the C1' of nucleotide 34 to detach the guanine base from the RNA, forming a covalent enzyme-RNA intermediate. The proton acceptor active site deprotonates the incoming PreQ1, allowing a nucleophilic attack on the C1' of the ribose to form the product. After dissociation, two additional enzymatic reactions on the tRNA convert PreQ1 to queuine (Q), resulting in the hypermodified nucleoside queuosine (7-(((4,5-cis-dihydroxy-2-cyclopenten-1-yl)amino)methyl)-7-deazaguanosine). The sequence is that of Queuine tRNA-ribosyltransferase from Helicobacter pylori (strain J99 / ATCC 700824) (Campylobacter pylori J99).